Consider the following 416-residue polypeptide: Actin-like protein 9 (416 aa).

The segment at 1–40 is disordered; the sequence is MDASRPKSSESQSSLEAPRPGPNPSPNVVNKPLQRDSPGM.

It belongs to the actin family. In terms of assembly, interacts with ACTL7A. As to expression, testis-specific.

It localises to the cytoplasmic vesicle. It is found in the secretory vesicle. Its subcellular location is the acrosome. The protein resides in the cytoplasm. The protein localises to the cytoskeleton. It localises to the perinuclear theca. Testis-specic protein that plays an important role in fusion of proacrosomal vesicles and perinuclear theca formation. The sequence is that of Actin-like protein 9 from Homo sapiens (Human).